A 1059-amino-acid chain; its full sequence is MDRNEGGDFPINTPNNINSSGGSYNNSMNNSSNNIGRDIGNNQSSRNLKPKPSQSNLKWIARDLKKKSVRKDSERKLKSSGVLKKKNTVMDFGEDDGGSGDDGNITEGLPISEGMDDLPSSSNSRGGSGNDEQKKQFPKEMNSPSSEYGTTSGGQRFDTLVDPDISLAEMEEKMRQHKVYQEQQQQQQQQQQQQKQKDKELSSQKKKPSSMQLSKKKHVAKEDSETLETIIGEEKKEVVFEVKPYFSHAILQATMAVFLIWNIFYFAYRAGWTMNRTDYITFSYSILFIIVEFISFLGSALHLNNFTNPCTFVLVVTLEQILAKRRKKHPTVMMYVCTYKEPPSIVSRTFRTAISMDYPSENLWIGLLDDSVNYRESRGWAHLQSVEKNFLYVLLQKAVYSVHNIRPPVTSQHEDPHGILNETSSKIESSTKEVIEAEVQWFIEYFLLNSWFGVGQEIPRDADDAERALIAKLRDDNFSPYRTFTKSESEKISNFTIDSLQSLWHGSAFFRPLIRSILLKKDYVRNFVSELNNQHRLRFLNTEALAMAQYQVLMMGRQELPWDEISSGNVRIDFDTCDGPIVSPKCTYLRRRKPPIPHNKAGNINNALFNESTKADYEFLGLLDADQQPHPDFLKRVLPYFYSDEGQDLAFVQTPQFFSNIYPVDDPLGHRNMEFYGPVMEGRSANNACPFVGTNAIFRRQPLYDIGGIMYNSVTEDMYTGMKLQVSGYKSWYHNEVLVVGTAPVDLKETLEQRKRWAQGAVEIFSLTPWGYIRGKLGWRKMLYNLDSCIYPFLSPTAFFYGASPLIMSIWTVPIVVKDPIIFILVGMIPVMVLPRVIQYMILRAKRPYEAGKSGPSLWVEATDLWRAEQTFFGFAGTYISSWREGSASIVKLLKARKISRHKLAMWNWKRDFVKKPVVCEVFRQTKLVNENDNAQESSGKHKAEQSFRTSNKESDTIKNSRLFLPNIILFVVNILAMMSAVLRFNCFQNDMWLLVVVAGFSFSTLWHLWSFIPMALRQSEKQWPYASSYHAHNIVLFLVLGFLVLLFVDVKVCIPRVG.

Disordered stretches follow at residues 1–159 and 174–220; these read MDRN…RFDT and MRQH…KHVA. A compositionally biased stretch (low complexity) spans 15 to 36; the sequence is NNINSSGGSYNNSMNNSSNNIG. Composition is skewed to polar residues over residues 40–57 and 142–154; these read GNNQSSRNLKPKPSQSNL and NSPSSEYGTTSGG. Low complexity predominate over residues 181-194; sequence QEQQQQQQQQQQQQ. Residues 204–219 show a composition bias toward basic residues; it reads QKKKPSSMQLSKKKHV. Helical transmembrane passes span 246-266, 280-300, and 306-323; these read FSHAILQATMAVFLIWNIFYF, ITFSYSILFIIVEFISFLGSA, and FTNPCTFVLVVTLEQILA. Residues 328 to 628 form a catalytic subdomain A region; the sequence is KHPTVMMYVC…FLGLLDADQQ (301 aa). The active site involves Asp-370. Substrate contacts are provided by Asp-624 and Asp-626. The interval 701 to 761 is catalytic subdomain B; it reads QPLYDIGGIM…EQRKRWAQGA (61 aa). Asp-717 is a catalytic residue. 2 consecutive transmembrane segments (helical) span residues 790–810 and 813–833; these read IYPFLSPTAFFYGASPLIMSI and VPIVVKDPIIFILVGMIPVMV. The interval 933 to 953 is disordered; that stretch reads DNAQESSGKHKAEQSFRTSNK. Over residues 939–953 the composition is skewed to basic and acidic residues; sequence SGKHKAEQSFRTSNK. A run of 3 helical transmembrane segments spans residues 963-983, 993-1013, and 1035-1055; these read LFLPNIILFVVNILAMMSAVL, WLLVVVAGFSFSTLWHLWSFI, and IVLFLVLGFLVLLFVDVKVCI.

The protein belongs to the glycosyltransferase 2 family. Requires Mg(2+) as cofactor.

The protein localises to the membrane. The enzyme catalyses [(1-&gt;4)-beta-D-glucosyl](n) + UDP-alpha-D-glucose = [(1-&gt;4)-beta-D-glucosyl](n+1) + UDP + H(+). It participates in glycan metabolism; amoeba cellulose biosynthesis. Its function is as follows. Catalytic subunit of cellulose synthase. It incorporates glucose from uridine 5'-diphosphate glucose (UDP-alpha-D-glucose) to cellulose (a (1-&gt;4)-beta-D-glucan), which is produced as an extracellular component for mechanical and chemical protection at the onset of the stalk formation, when the cells exhibit multicellular behavior during culmination. The polypeptide is Cellulose synthase catalytic subunit A [UDP-forming] (dcsA) (Dictyostelium discoideum (Social amoeba)).